The sequence spans 305 residues: Putative S-adenosyl-L-methionine-dependent methyltransferase MAB_3787 (305 aa).

Residues D132 and D161 to L162 each bind S-adenosyl-L-methionine.

This sequence belongs to the UPF0677 family.

Functionally, exhibits S-adenosyl-L-methionine-dependent methyltransferase activity. The protein is Putative S-adenosyl-L-methionine-dependent methyltransferase MAB_3787 of Mycobacteroides abscessus (strain ATCC 19977 / DSM 44196 / CCUG 20993 / CIP 104536 / JCM 13569 / NCTC 13031 / TMC 1543 / L948) (Mycobacterium abscessus).